The primary structure comprises 140 residues: Ig heavy chain V region 93G7 (140 aa).

The first 19 residues, 1 to 19 (MGWSFIFLFLLSVTAGVHS), serve as a signal peptide directing secretion. Residues 20–139 (EVQLQQSGAE…WGQGTPLTVS (120 aa)) form the Ig-like domain.

This Mus musculus (Mouse) protein is Ig heavy chain V region 93G7.